The primary structure comprises 121 residues: Large ribosomal subunit protein bL20 (121 aa).

This sequence belongs to the bacterial ribosomal protein bL20 family.

In terms of biological role, binds directly to 23S ribosomal RNA and is necessary for the in vitro assembly process of the 50S ribosomal subunit. It is not involved in the protein synthesizing functions of that subunit. This is Large ribosomal subunit protein bL20 from Wolbachia sp. subsp. Brugia malayi (strain TRS).